Consider the following 78-residue polypeptide: Small ribosomal subunit protein bS18 (78 aa).

It belongs to the bacterial ribosomal protein bS18 family. Part of the 30S ribosomal subunit. Forms a tight heterodimer with protein bS6.

Binds as a heterodimer with protein bS6 to the central domain of the 16S rRNA, where it helps stabilize the platform of the 30S subunit. The sequence is that of Small ribosomal subunit protein bS18 from Limosilactobacillus fermentum (strain NBRC 3956 / LMG 18251) (Lactobacillus fermentum).